Reading from the N-terminus, the 1487-residue chain is Protein clueless (1487 aa).

Disordered regions lie at residues 1 to 94 and 110 to 140; these read MALE…NGDA and GATAAAGATEAAAEVGSSGDGGAATEGEAAA. The span at 56 to 65 shows a compositional bias: basic residues; the sequence is TKKKGKKNRN. The segment covering 111-126 has biased composition (low complexity); sequence ATAAAGATEAAAEVGS. S284 bears the Phosphoserine mark. The 243-residue stretch at 438–680 folds into the Clu domain; the sequence is RAEDAFSSKL…RTFPPDVNFL (243 aa). A compositionally biased stretch (basic and acidic residues) spans 739 to 785; the sequence is QAEKELPSITEKQEEPEKEQAEKSSAEQPEKEKEKEKDKEDEQKESK. Disordered stretches follow at residues 739-794 and 980-1040; these read QAEK…TKSA and VSSE…TAST. The span at 988-1005 shows a compositional bias: basic residues; sequence KQSRNNGGKHNKHNKSNK. Polar residues predominate over residues 1009-1019; the sequence is PQSTSAAAATQ. Residues 1020 to 1040 are compositionally biased toward low complexity; it reads NGHSSTAANGSANSAANTAST. TPR repeat units follow at residues 1140 to 1173, 1266 to 1299, and 1301 to 1334; these read AYNFYTTGQAKIQQGLLKEGYELISEALNLLNNV, ALIDSNISLILHALGEYELSLRFIEHALKLNLKY, and GNKAMHVAVSYHLMARIQSCMGDFRSALNNEKET. Residues 1456–1487 form a disordered region; the sequence is DTEQPKEGSEVEGATATQLTNGSEDSTTTVSS. Residues 1470-1487 show a composition bias toward polar residues; that stretch reads TATQLTNGSEDSTTTVSS.

Belongs to the CLU family.

Its subcellular location is the cytoplasm. In terms of biological role, mRNA-binding protein involved in proper cytoplasmic distribution of mitochondria. This Drosophila mojavensis (Fruit fly) protein is Protein clueless.